Reading from the N-terminus, the 94-residue chain is Large ribosomal subunit protein bL25 (94 aa).

The protein belongs to the bacterial ribosomal protein bL25 family. Part of the 50S ribosomal subunit; part of the 5S rRNA/L5/L18/L25 subcomplex. Contacts the 5S rRNA. Binds to the 5S rRNA independently of L5 and L18.

Functionally, this is one of the proteins that binds to the 5S RNA in the ribosome where it forms part of the central protuberance. This chain is Large ribosomal subunit protein bL25, found in Klebsiella pneumoniae (strain 342).